The chain runs to 250 residues: Endomucin (250 aa).

A signal peptide spans 1–20 (MRLLQVTALFFLLSNSLCRG). 2 stretches are compositionally biased toward low complexity: residues 24-38 (KALT…SATT) and 45-60 (TNKS…TTNS). Disordered regions lie at residues 24–83 (KALT…ETTT) and 105–153 (NAVS…LTTA). N-linked (GlcNAc...) asparagine glycans are attached at residues Asn-46, Asn-115, and Asn-119. Composition is skewed to polar residues over residues 105–135 (NAVS…NQLP) and 143–153 (TETPSASLTTA). Residues 180–200 (VILPVVIALIVITVLVFTLVG) form a helical membrane-spanning segment. A disordered region spans residues 210–250 (PGTPESGNDQPQSDKESVKLLTVKTISHESGEHSAQGKAKN). Ser-226 is subject to Phosphoserine.

In terms of processing, highly O-glycosylated. Sialic acid-rich glycoprotein.

It is found in the membrane. Its function is as follows. Endothelial sialomucin, also called endomucin or mucin-like sialoglycoprotein, which interferes with the assembly of focal adhesion complexes and inhibits interaction between cells and the extracellular matrix. In Rattus norvegicus (Rat), this protein is Endomucin (Emcn).